We begin with the raw amino-acid sequence, 146 residues long: Hemoglobin subunit beta (146 aa).

At Val-1 the chain carries N-acetylvaline. One can recognise a Globin domain in the interval 2 to 146 (HLTPEEKTAV…VANALAHKYH (145 aa)). A Phosphothreonine modification is found at Thr-12. A Phosphoserine modification is found at Ser-44. The residue at position 59 (Lys-59) is an N6-acetyllysine. His-63 contributes to the heme b binding site. Residue Lys-82 is modified to N6-acetyllysine. A heme b-binding site is contributed by His-92. Cys-93 is modified (S-nitrosocysteine). Lys-144 carries the post-translational modification N6-acetyllysine.

It belongs to the globin family. In terms of assembly, heterotetramer of two alpha chains and two beta chains. Red blood cells.

Its function is as follows. Involved in oxygen transport from the lung to the various peripheral tissues. The polypeptide is Hemoglobin subunit beta (HBB) (Mandrillus sphinx (Mandrill)).